The sequence spans 83 residues: Major outer membrane lipoprotein (83 aa).

The signal sequence occupies residues 1–19 (MNNVLKFSALALAAVLATG). Residue Cys20 is the site of N-palmitoyl cysteine attachment. A lipid anchor (S-diacylglycerol cysteine) is attached at Cys20.

Its subcellular location is the cell outer membrane. The chain is Major outer membrane lipoprotein (oprI) from Pseudomonas aeruginosa (strain ATCC 15692 / DSM 22644 / CIP 104116 / JCM 14847 / LMG 12228 / 1C / PRS 101 / PAO1).